The primary structure comprises 441 residues: Protein translocase subunit SecY (441 aa).

Transmembrane regions (helical) follow at residues 18–38, 78–98, 124–144, 157–177, 180–200, 215–235, 272–292, 318–338, 382–402, and 403–423; these read ILFT…PSPG, AVGV…TVVI, IALA…GGLL, IFTL…VMWM, LITE…GIAA, GVVF…VVFV, VIPV…TQLI, LVYI…YVSI, IYLG…AGGT, and VQNL…GLDT.

The protein belongs to the SecY/SEC61-alpha family. As to quaternary structure, component of the Sec protein translocase complex. Heterotrimer consisting of SecY, SecE and SecG subunits. The heterotrimers can form oligomers, although 1 heterotrimer is thought to be able to translocate proteins. Interacts with the ribosome. Interacts with SecDF, and other proteins may be involved. Interacts with SecA.

The protein resides in the cell membrane. Functionally, the central subunit of the protein translocation channel SecYEG. Consists of two halves formed by TMs 1-5 and 6-10. These two domains form a lateral gate at the front which open onto the bilayer between TMs 2 and 7, and are clamped together by SecE at the back. The channel is closed by both a pore ring composed of hydrophobic SecY resides and a short helix (helix 2A) on the extracellular side of the membrane which forms a plug. The plug probably moves laterally to allow the channel to open. The ring and the pore may move independently. The sequence is that of Protein translocase subunit SecY from Mycobacterium bovis (strain ATCC BAA-935 / AF2122/97).